A 335-amino-acid polypeptide reads, in one-letter code: tRNA N6-adenosine threonylcarbamoyltransferase (335 aa).

Residues histidine 111, histidine 115, and tyrosine 132 each contribute to the Fe cation site. Substrate is bound by residues 132–136 (YVSGG), aspartate 164, glycine 177, glutamate 181, and asparagine 260. Aspartate 288 contributes to the Fe cation binding site.

It belongs to the KAE1 / TsaD family. Monomer. Component of the KEOPS complex that consists of Kae1, Bud32, Cgi121 and Pcc1; the whole complex dimerizes. The cofactor is Fe(2+).

The protein localises to the cytoplasm. The enzyme catalyses L-threonylcarbamoyladenylate + adenosine(37) in tRNA = N(6)-L-threonylcarbamoyladenosine(37) in tRNA + AMP + H(+). In terms of biological role, required for the formation of a threonylcarbamoyl group on adenosine at position 37 (t(6)A37) in tRNAs that read codons beginning with adenine. Is a component of the KEOPS complex that is probably involved in the transfer of the threonylcarbamoyl moiety of threonylcarbamoyl-AMP (TC-AMP) to the N6 group of A37. Kae1 likely plays a direct catalytic role in this reaction, but requires other protein(s) of the complex to fulfill this activity. The chain is tRNA N6-adenosine threonylcarbamoyltransferase from Methanococcoides burtonii (strain DSM 6242 / NBRC 107633 / OCM 468 / ACE-M).